Reading from the N-terminus, the 88-residue chain is Small ribosomal subunit protein bS20 (88 aa).

Over residues 1–10 (MANHKSSLKR) the composition is skewed to basic residues. Positions 1 to 24 (MANHKSSLKRAKQDIVRNTRNKSR) are disordered.

This sequence belongs to the bacterial ribosomal protein bS20 family.

Its function is as follows. Binds directly to 16S ribosomal RNA. This Desulfosudis oleivorans (strain DSM 6200 / JCM 39069 / Hxd3) (Desulfococcus oleovorans) protein is Small ribosomal subunit protein bS20.